We begin with the raw amino-acid sequence, 362 residues long: Protein ABHD12B (362 aa).

This sequence belongs to the serine esterase family.

The chain is Protein ABHD12B from Homo sapiens (Human).